The following is a 99-amino-acid chain: Malonate decarboxylase acyl carrier protein (99 aa).

Position 25 is an O-(phosphoribosyl dephospho-coenzyme A)serine (serine 25).

The protein belongs to the MdcC family. Post-translationally, covalently binds the prosthetic group of malonate decarboxylase.

Its subcellular location is the cytoplasm. Subunit of malonate decarboxylase, it is an acyl carrier protein to which acetyl and malonyl thioester residues are bound via a 2'-(5''-phosphoribosyl)-3'-dephospho-CoA prosthetic group and turn over during the catalytic mechanism. The protein is Malonate decarboxylase acyl carrier protein of Pseudomonas putida (Arthrobacter siderocapsulatus).